A 274-amino-acid chain; its full sequence is 2,3,4,5-tetrahydropyridine-2,6-dicarboxylate N-succinyltransferase (274 aa).

Substrate-binding residues include Arg104 and Asp141.

The protein belongs to the transferase hexapeptide repeat family. As to quaternary structure, homotrimer.

The protein resides in the cytoplasm. The enzyme catalyses (S)-2,3,4,5-tetrahydrodipicolinate + succinyl-CoA + H2O = (S)-2-succinylamino-6-oxoheptanedioate + CoA. Its pathway is amino-acid biosynthesis; L-lysine biosynthesis via DAP pathway; LL-2,6-diaminopimelate from (S)-tetrahydrodipicolinate (succinylase route): step 1/3. The polypeptide is 2,3,4,5-tetrahydropyridine-2,6-dicarboxylate N-succinyltransferase (Salmonella typhi).